A 935-amino-acid polypeptide reads, in one-letter code: GPI ethanolamine phosphate transferase 1 (935 aa).

Residues 1-5 lie on the Cytoplasmic side of the membrane; the sequence is MFGRL. Residues 6-26 form a helical membrane-spanning segment; sequence LLLGILFHVVFLKSIFDIYFV. The Lumenal segment spans residues 27 to 449; the sequence is TPLIHGMKQY…LQRYDWLLLR (423 aa). 4 N-linked (GlcNAc...) asparagine glycosylation sites follow: N86, N134, N315, and N398. A helical transmembrane segment spans residues 450–470; it reads SIVFFGYLSWIGYVICFVFSL. The Cytoplasmic portion of the chain corresponds to 471 to 483; sequence NIEPSSKIVKPVS. Residues 484 to 503 form a helical membrane-spanning segment; it reads VVKRVAFNIPFLLICIFFYI. Over 504-509 the chain is Lumenal; that stretch reads QSSPPF. Residues 510–530 form a helical membrane-spanning segment; that stretch reads YYGYALFPTIFLQLIHSIFPN. The Cytoplasmic segment spans residues 531-547; sequence TKLGFKNFLTVAKQKHG. The chain crosses the membrane as a helical span at residues 548-568; it reads FSLLKILFISLCILCLLQFIV. The Lumenal portion of the chain corresponds to 569–576; the sequence is YSYFHREG. Residues 577–597 traverse the membrane as a helical segment; sequence FSVILMGLAAWPWLLHADYAF. Residues 598–600 are Cytoplasmic-facing; it reads SHK. The chain crosses the membrane as a helical span at residues 601 to 621; the sequence is TISVSWSVLTSLLCFFTILPV. Residues 622-626 lie on the Lumenal side of the membrane; sequence NKKES. The chain crosses the membrane as a helical span at residues 627 to 647; it reads LLFIFAGGFAMSVAGVFYILY. Residues 648–663 are Cytoplasmic-facing; it reads RRNQAFQYSSTVTNKQ. A helical transmembrane segment spans residues 664-684; that stretch reads LVLQVLIIMATVPVTLKIADS. Residues 685 to 688 lie on the Lumenal side of the membrane; that stretch reads LQRN. Residues 689–709 traverse the membrane as a helical segment; that stretch reads IAIPPILRLVAFGLFITSYII. At 710–737 the chain is on the cytoplasmic side; sequence PSHHIRSCKHYFLDRLAILFLTFSPTMC. The helical transmembrane segment at 738–758 threads the bilayer; the sequence is MLSISFEALFYVVLFITLGLW. Residues 759–792 are Lumenal-facing; that stretch reads MELETELQKYTEQLHPEYSRKKDAKFHLSLSHIR. A helical membrane pass occupies residues 793–813; it reads ISLFFYIFINVAFFGTGNVAS. The Cytoplasmic portion of the chain corresponds to 814 to 835; that stretch reads LSTFALDSVKRFIPVFNPVTQG. A helical transmembrane segment spans residues 836-856; the sequence is ALLMYTILVPFIALSAAFGIM. At 857 to 865 the chain is on the lumenal side; the sequence is NKRLGGIQQ. A helical transmembrane segment spans residues 866–886; that stretch reads VTFFLAVGMADIVTINFFYLV. Residues 887–894 are Cytoplasmic-facing; that stretch reads KDEGSWKD. The chain crosses the membrane as a helical span at residues 895-915; that stretch reads IGVSISHFCISNFLILFITAL. At 916 to 935 the chain is on the lumenal side; sequence EHASAILCKNITYTIHEKVN. N925 is a glycosylation site (N-linked (GlcNAc...) asparagine).

This sequence belongs to the PIGG/PIGN/PIGO family. PIGN subfamily.

Its subcellular location is the endoplasmic reticulum membrane. The protein operates within glycolipid biosynthesis; glycosylphosphatidylinositol-anchor biosynthesis. Functionally, ethanolamine phosphate transferase involved in glycosylphosphatidylinositol-anchor biosynthesis. Transfers ethanolamine phosphate to the first alpha-1,4-linked mannose of the glycosylphosphatidylinositol precursor of GPI-anchor. This Schizosaccharomyces pombe (strain 972 / ATCC 24843) (Fission yeast) protein is GPI ethanolamine phosphate transferase 1 (its8).